Consider the following 1553-residue polypeptide: Pre-mRNA cleavage complex 2 protein Pcf11 (1553 aa).

Position 2 is an N-acetylserine (Ser-2). The CID domain occupies 14-142 (AREDACRDYQ…ALDVRVNSLD (129 aa)). Ser-120 is modified (phosphoserine). A Phosphothreonine modification is found at Thr-121. The disordered stretch occupies residues 167 to 186 (NKSPDEPSTPGTVVSSPSIS). Phosphoserine occurs at positions 169 and 182. The segment covering 174–186 (STPGTVVSSPSIS) has biased composition (low complexity). Residues 208–235 (LLAKQKQLLELQQKKLELELEQAKAQLA) adopt a coiled-coil conformation. The segment at 265–648 (AVKTPHQVPV…KQQHRLSVDA (384 aa)) is disordered. Lys-291 is covalently cross-linked (Glycyl lysine isopeptide (Lys-Gly) (interchain with G-Cter in SUMO2)). Basic and acidic residues predominate over residues 308 to 318 (HGKEQSHRKEF). Positions 321–342 (NTINQSDIKTSKNVPSEKLNSS) are enriched in polar residues. A Glycyl lysine isopeptide (Lys-Gly) (interchain with G-Cter in SUMO2) cross-link involves residue Lys-329. Composition is skewed to basic and acidic residues over residues 343-365 (KQEK…DSKS), 381-422 (HTKD…DVKE), and 428-443 (EKKE…EHRV). Lys-457 is covalently cross-linked (Glycyl lysine isopeptide (Lys-Gly) (interchain with G-Cter in SUMO2)). Basic residues predominate over residues 476 to 487 (STRKRSRSRSPK). Residues Ser-490, Ser-495, Ser-510, and Ser-512 each carry the phosphoserine modification. A compositionally biased stretch (basic residues) spans 495–509 (SPKRRDRRSPKRRQR). Basic and acidic residues-rich tracts occupy residues 530–568 (SHME…DRPQ) and 600–616 (SGWE…EHSK). Ser-645 carries the post-translational modification Phosphoserine. A Glycyl lysine isopeptide (Lys-Gly) (interchain with G-Cter in SUMO2) cross-link involves residue Lys-654. Ser-705 bears the Phosphoserine mark. The tract at residues 707-733 (FNDRFPLKRPRYEDSDKPFVDGPASRF) is disordered. Basic and acidic residues predominate over residues 716 to 725 (PRYEDSDKPF). Lys-723 participates in a covalent cross-link: Glycyl lysine isopeptide (Lys-Gly) (interchain with G-Cter in SUMO2). The residue at position 777 (Ser-777) is a Phosphoserine. Thr-785 carries the post-translational modification Phosphothreonine. Ser-794 is subject to Phosphoserine. An asymmetric dimethylarginine mark is found at Arg-805, Arg-820, and Arg-833. Position 851 is a phosphoserine (Ser-851). A disordered region spans residues 921 to 940 (HGPSGAAIRFDGPHGQPGGG). Residues Arg-929, Arg-944, Arg-957, Arg-982, Arg-995, Arg-1008, Arg-1092, and Arg-1103 each carry the asymmetric dimethylarginine modification. A Glycyl lysine isopeptide (Lys-Gly) (interchain with G-Cter in SUMO2) cross-link involves residue Lys-1276. A disordered region spans residues 1286–1313 (DSATAQVTEAVAQPPPEEDEDQNEDQDV). A compositionally biased stretch (acidic residues) spans 1301-1313 (PEEDEDQNEDQDV). Glycyl lysine isopeptide (Lys-Gly) (interchain with G-Cter in SUMO2) cross-links involve residues Lys-1417, Lys-1509, Lys-1522, and Lys-1544. The disordered stretch occupies residues 1516–1553 (CESPKVKEEQIDAPPACSEESVATPTEIKTESDTVESV).

In terms of assembly, associates with the phosphorylated CTD domain of POLR2A /RNA polymerase II. In terms of processing, phosphorylation at Ser-120 and/or Thr-121 by WNK1 weakens its association with POLR2A/RNA polymerase II, promoting transcript release from the chromatin template and mRNA export to the cytoplasm.

It localises to the nucleus. In terms of biological role, component of pre-mRNA cleavage complex II, which promotes transcription termination by RNA polymerase II. This Mus musculus (Mouse) protein is Pre-mRNA cleavage complex 2 protein Pcf11.